Here is a 232-residue protein sequence, read N- to C-terminus: Ubiquinone biosynthesis O-methyltransferase (232 aa).

Positions 36, 55, 76, and 120 each coordinate S-adenosyl-L-methionine.

Belongs to the methyltransferase superfamily. UbiG/COQ3 family.

It catalyses the reaction a 3-demethylubiquinol + S-adenosyl-L-methionine = a ubiquinol + S-adenosyl-L-homocysteine + H(+). The enzyme catalyses a 3-(all-trans-polyprenyl)benzene-1,2-diol + S-adenosyl-L-methionine = a 2-methoxy-6-(all-trans-polyprenyl)phenol + S-adenosyl-L-homocysteine + H(+). It participates in cofactor biosynthesis; ubiquinone biosynthesis. O-methyltransferase that catalyzes the 2 O-methylation steps in the ubiquinone biosynthetic pathway. This Pseudomonas paraeruginosa (strain DSM 24068 / PA7) (Pseudomonas aeruginosa (strain PA7)) protein is Ubiquinone biosynthesis O-methyltransferase.